Here is a 233-residue protein sequence, read N- to C-terminus: MDDTQVNAQLDQMKNFILQEAQDKANEIKTKATQEFTSEKGRIFQNEKIKIIKEYEKKQKLIEVQKKINLSNELNKSRLSVLKVREECLRDVIKEAQKKLATISDDKDKYQTILKNLIYQGFVKLNENKIQVVGRKEDAGLLEKATTEAAAQYKKNVGKSIDVSVDKERFLPQGPKSDYNGPTCCGGVILSALEGRIICKNTLDSRLEICFDQLTPVIRTQLYGASTSRKFFD.

This sequence belongs to the V-ATPase E subunit family. In terms of assembly, V-ATPase is a heteromultimeric enzyme composed of a peripheral catalytic V1 complex (components A to H) attached to an integral membrane V0 proton pore complex (components: a, c, c', c'' and d).

Subunit of the peripheral V1 complex of vacuolar ATPase essential for assembly or catalytic function. V-ATPase is responsible for acidifying a variety of intracellular compartments in eukaryotic cells. This Dictyostelium discoideum (Social amoeba) protein is V-type proton ATPase subunit E (vatE).